Reading from the N-terminus, the 393-residue chain is Phosphatidate cytidylyltransferase (393 aa).

The next 8 membrane-spanning stretches (helical) occupy residues 49 to 69 (NFFR…WISV), 73 to 93 (IYSF…IIGI), 108 to 128 (IILG…IMMM), 141 to 161 (LSFV…ASLR), 171 to 191 (LFAL…CAIF), 198 to 218 (FWFV…YVVG), 237 to 257 (GFIG…HLHV), and 290 to 310 (IHII…GFLA).

This sequence belongs to the CDS family.

Its subcellular location is the membrane. It carries out the reaction a 1,2-diacyl-sn-glycero-3-phosphate + CTP + H(+) = a CDP-1,2-diacyl-sn-glycerol + diphosphate. It participates in phospholipid metabolism; CDP-diacylglycerol biosynthesis; CDP-diacylglycerol from sn-glycerol 3-phosphate: step 3/3. The protein is Phosphatidate cytidylyltransferase (CDS1) of Encephalitozoon cuniculi (strain GB-M1) (Microsporidian parasite).